Here is a 748-residue protein sequence, read N- to C-terminus: Long-chain-alcohol oxidase FAO4B (748 aa).

The segment covering 1 to 18 has biased composition (basic residues); that stretch reads MEDVRRRNRGHPLLRSKK. The disordered stretch occupies residues 1–25; sequence MEDVRRRNRGHPLLRSKKRGEGYNH. Transmembrane regions (helical) follow at residues 89-109 and 140-160; these read IILM…SLCL and FLLP…FYFF. Residue 238–253 participates in FAD binding; sequence CDAVVVGSGSGGGVAA. His-679 acts as the Proton acceptor in catalysis.

It belongs to the GMC oxidoreductase family.

It localises to the membrane. It carries out the reaction a long-chain primary fatty alcohol + O2 = a long-chain fatty aldehyde + H2O2. Its function is as follows. Long-chain fatty alcohol oxidase involved in the omega-oxidation pathway of lipid degradation. The chain is Long-chain-alcohol oxidase FAO4B (FAO4B) from Arabidopsis thaliana (Mouse-ear cress).